Consider the following 352-residue polypeptide: UDP-3-O-acylglucosamine N-acyltransferase (352 aa).

The active-site Proton acceptor is the H257.

This sequence belongs to the transferase hexapeptide repeat family. LpxD subfamily. As to quaternary structure, homotrimer.

It carries out the reaction a UDP-3-O-[(3R)-3-hydroxyacyl]-alpha-D-glucosamine + a (3R)-hydroxyacyl-[ACP] = a UDP-2-N,3-O-bis[(3R)-3-hydroxyacyl]-alpha-D-glucosamine + holo-[ACP] + H(+). Its pathway is bacterial outer membrane biogenesis; LPS lipid A biosynthesis. Its function is as follows. Catalyzes the N-acylation of UDP-3-O-acylglucosamine using 3-hydroxyacyl-ACP as the acyl donor. Is involved in the biosynthesis of lipid A, a phosphorylated glycolipid that anchors the lipopolysaccharide to the outer membrane of the cell. The polypeptide is UDP-3-O-acylglucosamine N-acyltransferase (Methylobacterium sp. (strain 4-46)).